An 802-amino-acid polypeptide reads, in one-letter code: DNA mismatch repair protein MutS (802 aa).

An ATP-binding site is contributed by Gly-617–Ser-624.

This sequence belongs to the DNA mismatch repair MutS family.

Its function is as follows. This protein is involved in the repair of mismatches in DNA. It is possible that it carries out the mismatch recognition step. This protein has a weak ATPase activity. The chain is DNA mismatch repair protein MutS from Buchnera aphidicola subsp. Acyrthosiphon pisum (strain 5A).